Here is a 57-residue protein sequence, read N- to C-terminus: Potassium channel toxin alpha-KTx 8.8 (57 aa).

The first 19 residues, 1-19 (MCRLYAIILIVLVMNVIMT), serve as a signal peptide directing secretion. Positions 20–28 (IIPDSKVEV) are excised as a propeptide. Disulfide bonds link Cys31–Cys47, Cys34–Cys52, and Cys38–Cys54.

Belongs to the short scorpion toxin superfamily. Potassium channel inhibitor family. Alpha-KTx 08 subfamily. Post-translationally, contains 3 disulfide bonds. As to expression, expressed by the venom gland.

The protein localises to the secreted. Functionally, selectively inhibits voltage-gated potassium channels rKv1.2/KCNA2 (IC(50)=331 nM) and hKv1.3/KCNA3 (IC(50)=503 nM). Partially inihibts rKv1.6/KCNA6 (IC(50)=9983 nM). In Orthochirus scrobiculosus (Central Asian scorpion), this protein is Potassium channel toxin alpha-KTx 8.8.